The chain runs to 190 residues: Xanthine phosphoribosyltransferase (190 aa).

Xanthine contacts are provided by leucine 20 and asparagine 27. Residue 127–131 coordinates 5-phospho-alpha-D-ribose 1-diphosphate; it reads AYGNA. Residue lysine 155 coordinates xanthine.

It belongs to the purine/pyrimidine phosphoribosyltransferase family. Xpt subfamily. In terms of assembly, homodimer.

It is found in the cytoplasm. The enzyme catalyses XMP + diphosphate = xanthine + 5-phospho-alpha-D-ribose 1-diphosphate. Its pathway is purine metabolism; XMP biosynthesis via salvage pathway; XMP from xanthine: step 1/1. Functionally, converts the preformed base xanthine, a product of nucleic acid breakdown, to xanthosine 5'-monophosphate (XMP), so it can be reused for RNA or DNA synthesis. The sequence is that of Xanthine phosphoribosyltransferase from Bacteroides thetaiotaomicron (strain ATCC 29148 / DSM 2079 / JCM 5827 / CCUG 10774 / NCTC 10582 / VPI-5482 / E50).